We begin with the raw amino-acid sequence, 175 residues long: Secretion monitor (175 aa).

Residues 1–38 (MSIINFWRQFGRRYFWSHLLLGMVAAGIGMPSLVSAHA) form the signal peptide.

It belongs to the SecM family.

The protein resides in the cytoplasm. Its subcellular location is the cytosol. It is found in the periplasm. Its function is as follows. Regulates secA expression by translational coupling of the secM secA operon. Translational pausing at a specific Pro residue 5 residues before the end of the protein may allow disruption of a mRNA repressor helix that normally suppresses secA translation initiation. The chain is Secretion monitor from Proteus mirabilis (strain HI4320).